We begin with the raw amino-acid sequence, 160 residues long: Salivary gland broad-spectrum antiviral protein (160 aa).

Residues 17-37 form a helical membrane-spanning segment; it reads VALGLYFTVVVFVLFITSVNL. N62 and N145 each carry an N-linked (GlcNAc...) asparagine glycan.

In terms of tissue distribution, salivary gland (at protein level).

Its subcellular location is the membrane. Its function is as follows. (Microbial infection) Modulates replication of Zika virus in salivary glands. In terms of biological role, (Microbial infection) Modulates replication of dengue virus type 2 in salivary glands. (Microbial infection) Modulates replication of chikungunya virus in salivary glands. In Aedes aegypti (Yellowfever mosquito), this protein is Salivary gland broad-spectrum antiviral protein.